Here is a 446-residue protein sequence, read N- to C-terminus: Packaging protein 1 (446 aa).

The disordered stretch occupies residues methionine 1–histidine 71. The segment covering phenylalanine 31–glutamate 43 has biased composition (basic and acidic residues). Position 170 to 177 (glycine 170 to serine 177) interacts with ATP. The DNA-binding stretch occupies residues arginine 439 to lysine 446.

This sequence belongs to the adenoviridae packaging protein 1 family. Homodimer. Part of a genome packaging complex composed of packaging proteins 1, 2 and 3; this complex specifically binds to the packaging sequence on the left end of viral genomic DNA and performs packaging of the viral genome. Interacts with protein 33K.

Its subcellular location is the virion. It localises to the host nucleus. It is found in the host nucleoplasm. The protein resides in the host nucleolus. Functionally, component of the packaging machinery which encapsidates the viral DNA into preformed capsids and transcriptional activator of the viral major late promoter (MLP). Binds, along with packaging proteins 2 and 3, to the specific packaging sequence on the left end of viral genomic DNA and displays ATPase activity thereby providing the power stroke of the packaging machinery. The activity of packaging protein IVa2 is stimulated by protein 33K which acts as a terminase. May be the protein that pumps DNA into the capsid powered by ATP hydrolysis. Specifically binds to the 5'-CG-3' nucleotides of the repeats making up the packaging sequence. Component of the DEF-A and DEF-B transcription factors that bind downstream elements of the major late promoter (MLP), and stimulate transcription from the MLP after initiation of viral DNA replication. DEF-A is a heterodimer packaging proteins 1 and 2 and DEF-B is a homodimer of packaging protein 1. The protein is Packaging protein 1 of Canine adenovirus serotype 2 (strain Toronto A 26-61) (CAdV-2).